Consider the following 88-residue polypeptide: Elongation factor 1-beta (88 aa).

It belongs to the EF-1-beta/EF-1-delta family.

In terms of biological role, promotes the exchange of GDP for GTP in EF-1-alpha/GDP, thus allowing the regeneration of EF-1-alpha/GTP that could then be used to form the ternary complex EF-1-alpha/GTP/AAtRNA. The chain is Elongation factor 1-beta from Natronomonas pharaonis (strain ATCC 35678 / DSM 2160 / CIP 103997 / JCM 8858 / NBRC 14720 / NCIMB 2260 / Gabara) (Halobacterium pharaonis).